Here is a 171-residue protein sequence, read N- to C-terminus: Ribosome maturation factor RimM (171 aa).

The PRC barrel domain occupies 97 to 170 (EGEYYYHEII…LVTIHVMEGL (74 aa)).

This sequence belongs to the RimM family. Binds ribosomal protein uS19.

The protein localises to the cytoplasm. An accessory protein needed during the final step in the assembly of 30S ribosomal subunit, possibly for assembly of the head region. Essential for efficient processing of 16S rRNA. May be needed both before and after RbfA during the maturation of 16S rRNA. It has affinity for free ribosomal 30S subunits but not for 70S ribosomes. The polypeptide is Ribosome maturation factor RimM (Bacillus cereus (strain ZK / E33L)).